The following is a 253-amino-acid chain: Ubiquinone biosynthesis O-methyltransferase (253 aa).

Residues R47, G78, D99, and M141 each coordinate S-adenosyl-L-methionine.

Belongs to the methyltransferase superfamily. UbiG/COQ3 family.

It catalyses the reaction a 3-demethylubiquinol + S-adenosyl-L-methionine = a ubiquinol + S-adenosyl-L-homocysteine + H(+). The enzyme catalyses a 3-(all-trans-polyprenyl)benzene-1,2-diol + S-adenosyl-L-methionine = a 2-methoxy-6-(all-trans-polyprenyl)phenol + S-adenosyl-L-homocysteine + H(+). The protein operates within cofactor biosynthesis; ubiquinone biosynthesis. In terms of biological role, O-methyltransferase that catalyzes the 2 O-methylation steps in the ubiquinone biosynthetic pathway. In Rhodopseudomonas palustris (strain HaA2), this protein is Ubiquinone biosynthesis O-methyltransferase.